The chain runs to 513 residues: ATP synthase subunit alpha (513 aa).

169–176 provides a ligand contact to ATP; sequence GDRQTGKT.

It belongs to the ATPase alpha/beta chains family. As to quaternary structure, F-type ATPases have 2 components, CF(1) - the catalytic core - and CF(0) - the membrane proton channel. CF(1) has five subunits: alpha(3), beta(3), gamma(1), delta(1), epsilon(1). CF(0) has three main subunits: a(1), b(2) and c(9-12). The alpha and beta chains form an alternating ring which encloses part of the gamma chain. CF(1) is attached to CF(0) by a central stalk formed by the gamma and epsilon chains, while a peripheral stalk is formed by the delta and b chains.

It is found in the cell inner membrane. The enzyme catalyses ATP + H2O + 4 H(+)(in) = ADP + phosphate + 5 H(+)(out). Its function is as follows. Produces ATP from ADP in the presence of a proton gradient across the membrane. The alpha chain is a regulatory subunit. This chain is ATP synthase subunit alpha, found in Yersinia pseudotuberculosis serotype O:1b (strain IP 31758).